A 382-amino-acid polypeptide reads, in one-letter code: MRSGGRGRPRLRLGERGVMEPLLPPKRRLLPRVRLLPLLLALAVGSAFYTIWSGWHRRTEELPLGRELRVPLIGSLPEARLRRVVGQLDPQRLWGTYLRPLLVVRTPGSPGNLQVRKFLEATLRSLTAGWHVELDPFTASTPLGPVDFGNVVATLDPGAARHLTLACHYDSKLFPPGSTPFVGATDSAVPCALLLELAQALDLELSRAKEQAAPVTLQLLFLDGEEALKEWGPKDSLYGSRHLAQLMESIPHSPGPTRIQAIELFMLLDLLGAPNPTFYSHFPRTVRWFHRLRSIEKRLHRLNLLQSHPQEVMYFQPGEPFGSVEDDHIPFLRRGVPVLHLISTPFPAVWHTPADTEANLHPPTVHNLSRILAVFLAEYLGL.

The helical transmembrane segment at 35 to 55 (LLPLLLALAVGSAFYTIWSGW) threads the bilayer. A disulfide bridge connects residues Cys167 and Cys191. Position 186 (Asp186) interacts with Zn(2+). The active-site Proton acceptor is the Glu225. Glu226 serves as a coordination point for Zn(2+). The active-site Proton acceptor is the Asp269. A Zn(2+)-binding site is contributed by His351.

The protein belongs to the glutaminyl-peptide cyclotransferase family.

It is found in the golgi apparatus membrane. The enzyme catalyses N-terminal L-glutaminyl-[peptide] = N-terminal 5-oxo-L-prolyl-[peptide] + NH4(+). Its function is as follows. Responsible for the biosynthesis of pyroglutamyl peptides. The sequence is that of Glutaminyl-peptide cyclotransferase-like protein (QPCTL) from Macaca fascicularis (Crab-eating macaque).